The primary structure comprises 231 residues: UPF0749 protein YlxW (231 aa).

Residues 1–34 (MRGKSAVLLSLIMLIAGFLISFSFQMTKENNKSA) form the signal peptide. A coiled-coil region spans residues 44-94 (YALRDELLKQEKENKKFEKELYQKQNKVRQAENKLKKEKSEYYNVLEDTEK).

The protein belongs to the UPF0749 family.

In terms of biological role, may be involved in cell division and sporulation. The protein is UPF0749 protein YlxW (ylxW) of Bacillus subtilis (strain 168).